The sequence spans 431 residues: UDP-N-acetylmuramate--L-alanine ligase (431 aa).

Residue 108–114 (GSHGKTS) coordinates ATP.

It belongs to the MurCDEF family.

Its subcellular location is the cytoplasm. The enzyme catalyses UDP-N-acetyl-alpha-D-muramate + L-alanine + ATP = UDP-N-acetyl-alpha-D-muramoyl-L-alanine + ADP + phosphate + H(+). Its pathway is cell wall biogenesis; peptidoglycan biosynthesis. In terms of biological role, cell wall formation. The sequence is that of UDP-N-acetylmuramate--L-alanine ligase from Macrococcus caseolyticus (strain JCSC5402) (Macrococcoides caseolyticum).